Here is a 1474-residue protein sequence, read N- to C-terminus: SH3 and multiple ankyrin repeat domains protein 2 (1474 aa).

Polar residues predominate over residues 66-76 (LSPQLLQQTPS). The segment at 66–125 (LSPQLLQQTPSKPDGATKSLGSYAPGPRSRSPSLNRLGGAGEDGKRPQPPHWHVGSPFTP) is disordered. Residues 148–207 (VPGRLFVAIKPYQPQVDGEIPLHRGDRVKVLSIGEGGFWEGSARGHIGWFPAECVEEVQC) enclose the SH3 domain. Gln162 carries the phosphoserine modification. The PDZ domain occupies 248 to 342 (TVVLQKKDNE…HLVLKVVTVT (95 aa)). A Phosphoserine modification is found at Ser373. The segment at 392 to 413 (RKKKDKPEEIVPASKPSRTAEN) is disordered. Residue Ser457 is modified to Phosphoserine. Thr486 carries the phosphothreonine modification. Residues 504–534 (LSMPDTSEDIPPPPQSVPPSPPPPSPTTYNC) form a disordered region. Over residues 513 to 529 (IPPPPQSVPPSPPPPSP) the composition is skewed to pro residues. Ser586 is subject to Phosphoserine. Disordered regions lie at residues 659–920 (TIIV…ADDK), 947–995 (PVAG…PAAA), and 1057–1153 (PALA…ESMD). The span at 666–678 (STSSSGKSSQGSS) shows a compositional bias: low complexity. Residues 711-722 (VRDREKRLEARR) show a composition bias toward basic and acidic residues. Position 724 is a phosphoserine (Ser724). Over residues 783 to 795 (LGGGEAGAQGEAG) the composition is skewed to gly residues. Composition is skewed to low complexity over residues 811-823 (PAAA…PASP) and 833-846 (RLLD…LALS). 2 stretches are compositionally biased toward basic and acidic residues: residues 847–868 (ARDR…KADL) and 899–920 (RRQE…ADDK). Thr903 bears the Phosphothreonine mark. The span at 1075–1085 (SLNSSQPANST) shows a compositional bias: polar residues. Over residues 1119 to 1130 (VDSRSSSDHHLE) the composition is skewed to basic and acidic residues. Positions 1131-1151 (TTSTISTVSSISTLSSEGGES) are enriched in low complexity. The SH3-binding signature appears at 1169 to 1175 (PPVPPKP). 2 disordered regions span residues 1195–1216 (EDTD…SAQA) and 1260–1401 (NRGK…ISNK). A compositionally biased stretch (pro residues) spans 1202 to 1212 (IPPPAPPPPPG). Residues 1291–1305 (STVSGTRSTTVTFTV) are compositionally biased toward low complexity. The O-linked (GlcNAc) threonine glycan is linked to Thr1292. The segment covering 1307–1317 (PGTSQPITLQS) has biased composition (polar residues). Ser1334 and Ser1338 each carry phosphoserine. Low complexity-rich tracts occupy residues 1352 to 1363 (SAAAASPSPTLS) and 1385 to 1399 (RSRS…QPIS). The SAM domain maps to 1411–1474 (WTKPDVADWL…ERALKQLLDR (64 aa)).

The protein belongs to the SHANK family. In terms of assembly, is part of a complex with DLG4/PSD-95 and DLGAP1/GKAP. Interacts with CTTN/cortactin SH3 domain, DLGAP1/GKAP and alpha-latrotoxin receptor 1. Interacts with DNM2, DBNL, GRID2, BAIAP2, SLC9A3, PLCB3 and CFTR. Interacts with ABI1 (via SH3 domain). Interacts (via proline-rich region) with PDE4D isoform 5 (via N-terminal region). Interacts with PDE4D isoform 33, isoform 4, isoform 7, isoform 8 and isoform 9 but not isoform 32 and isoform 6. Interacts weakly with PDE4D isoform 31. Interacts with ABI1. As to expression, expressed in epithelial cells (at protein level). All isoforms except isoform 7 are expressed predominantly in brain, with highest levels in olfactory bulb, cerebral cortex, cerebellum, central gray matter and hippocampus. Moderate levels of expression are seen in the caudate putamen, thalamic nuclei and brain stem. In cerebellum primarily expressed in Purkinje cells. Isoform 7 is not expressed in brain but expressed in liver, cholangiocytes and thymus. Isoform 7 is present in pancreas, colonic mucosa and thymocytes (at protein level).

The protein resides in the apical cell membrane. It is found in the cytoplasm. Its subcellular location is the synapse. It localises to the postsynaptic density. The protein localises to the cell projection. The protein resides in the growth cone. It is found in the dendritic spine. Functionally, seems to be an adapter protein in the postsynaptic density (PSD) of excitatory synapses that interconnects receptors of the postsynaptic membrane including NMDA-type and metabotropic glutamate receptors, and the actin-based cytoskeleton. May play a role in the structural and functional organization of the dendritic spine and synaptic junction. This Rattus norvegicus (Rat) protein is SH3 and multiple ankyrin repeat domains protein 2 (Shank2).